The chain runs to 277 residues: Hemin import ATP-binding protein HmuV (277 aa).

One can recognise an ABC transporter domain in the interval 19-259 (VEVADLNYSV…AIIEEAFGHR (241 aa)). 51–58 (GRNGAGKS) lines the ATP pocket.

It belongs to the ABC transporter superfamily. Heme (hemin) importer (TC 3.A.1.14.5) family. In terms of assembly, the complex is composed of two ATP-binding proteins (HmuV), two transmembrane proteins (HmuU) and a solute-binding protein (HmuT).

It localises to the cell membrane. Its function is as follows. Part of the ABC transporter complex HmuTUV involved in hemin import. Responsible for energy coupling to the transport system. The chain is Hemin import ATP-binding protein HmuV from Deinococcus geothermalis (strain DSM 11300 / CIP 105573 / AG-3a).